The sequence spans 143 residues: Silver-binding protein SilE (143 aa).

A signal peptide spans 1-20; the sequence is MKNIVLASLLGFGLISSAWA.

To E.coli PcoE.

It is found in the periplasm. Functionally, component of the sil cation-efflux system that confers resistance to silver. This Salmonella typhimurium protein is Silver-binding protein SilE (silE).